Here is a 180-residue protein sequence, read N- to C-terminus: Endoribonuclease YbeY (180 aa).

Zn(2+) contacts are provided by H118, H122, and H128.

It belongs to the endoribonuclease YbeY family. Zn(2+) serves as cofactor.

Its subcellular location is the cytoplasm. In terms of biological role, single strand-specific metallo-endoribonuclease involved in late-stage 70S ribosome quality control and in maturation of the 3' terminus of the 16S rRNA. The protein is Endoribonuclease YbeY of Rhodococcus opacus (strain B4).